A 161-amino-acid chain; its full sequence is Nucleotide-binding protein Shew_2893 (161 aa).

This sequence belongs to the YajQ family.

Nucleotide-binding protein. The chain is Nucleotide-binding protein Shew_2893 from Shewanella loihica (strain ATCC BAA-1088 / PV-4).